Reading from the N-terminus, the 73-residue chain is Probable movement protein p8 (73 aa).

The span at 1–12 shows a compositional bias: polar residues; the sequence is MSTVETPAQDTL. Positions 1–48 are disordered; sequence MSTVETPAQDTLATKEPNKTGAKDRQQARSARLSVAAGAGRTALSQRD. Over residues 16–27 the composition is skewed to basic and acidic residues; the sequence is EPNKTGAKDRQQ.

This sequence belongs to the carmovirus/necrovirus/panicovirus movement protein p8 family.

It localises to the host cell wall. Its function is as follows. Cell-to-cell movement. In Muhlenbergia (Blackwell switchgrass), this protein is Probable movement protein p8.